Reading from the N-terminus, the 349-residue chain is Ion-translocating oxidoreductase complex subunit D (349 aa).

3 helical membrane passes run 20–42 (VMQR…FGWG), 77–99 (SAML…WMIV), and 124–144 (AMAA…TWIA). An FMN phosphoryl threonine modification is found at threonine 185. 5 consecutive transmembrane segments (helical) span residues 212–232 (STGV…LVLL), 239–259 (WHIS…GFLL), 265–285 (ASPL…FIAT), 291–311 (ATSS…VYII), and 315–335 (GGYP…APFI).

Belongs to the NqrB/RnfD family. As to quaternary structure, the complex is composed of six subunits: RnfA, RnfB, RnfC, RnfD, RnfE and RnfG. The cofactor is FMN.

Its subcellular location is the cell inner membrane. Part of a membrane-bound complex that couples electron transfer with translocation of ions across the membrane. This is Ion-translocating oxidoreductase complex subunit D from Shewanella baltica (strain OS223).